A 460-amino-acid polypeptide reads, in one-letter code: ATP synthase subunit beta (460 aa).

Residue 150-157 (GGAGVGKT) participates in ATP binding.

It belongs to the ATPase alpha/beta chains family. In terms of assembly, F-type ATPases have 2 components, CF(1) - the catalytic core - and CF(0) - the membrane proton channel. CF(1) has five subunits: alpha(3), beta(3), gamma(1), delta(1), epsilon(1). CF(0) has three main subunits: a(1), b(2) and c(9-12). The alpha and beta chains form an alternating ring which encloses part of the gamma chain. CF(1) is attached to CF(0) by a central stalk formed by the gamma and epsilon chains, while a peripheral stalk is formed by the delta and b chains.

It localises to the cell inner membrane. It catalyses the reaction ATP + H2O + 4 H(+)(in) = ADP + phosphate + 5 H(+)(out). Functionally, produces ATP from ADP in the presence of a proton gradient across the membrane. The catalytic sites are hosted primarily by the beta subunits. The chain is ATP synthase subunit beta from Photorhabdus laumondii subsp. laumondii (strain DSM 15139 / CIP 105565 / TT01) (Photorhabdus luminescens subsp. laumondii).